Here is a 146-residue protein sequence, read N- to C-terminus: Snaclec 1 (146 aa).

A signal peptide spans 1–23; that stretch reads MGRFIFMSFGLLVVFLSLSGTGA. 3 disulfides stabilise this stretch: Cys-25–Cys-36, Cys-53–Cys-142, and Cys-119–Cys-134. In terms of domain architecture, C-type lectin spans 32-143; sequence YEGHCYRVFQ…CSRTYSFVCK (112 aa).

Belongs to the snaclec family. In terms of assembly, heterodimer; disulfide-linked. Expressed by the venom gland.

It is found in the secreted. Functionally, interferes with one step of hemostasis (modulation of platelet aggregation, or coagulation cascade, for example). The polypeptide is Snaclec 1 (Sistrurus catenatus edwardsii (Desert massasauga)).